A 448-amino-acid polypeptide reads, in one-letter code: Serine/threonine-protein phosphatase 2A regulatory subunit B'' subunit gamma (448 aa).

EF-hand domains lie at 268-303 (PSAL…TLTC) and 336-371 (KEPA…IQEQ). Ca(2+) is bound by residues aspartate 281, aspartate 283, asparagine 285, methionine 287, and glutamate 292.

The protein localises to the nucleus. It is found in the cytoplasm. Possible role in the regulation of cell death. This is Serine/threonine-protein phosphatase 2A regulatory subunit B'' subunit gamma (ppp2r3c) from Xenopus tropicalis (Western clawed frog).